The following is a 155-amino-acid chain: 3-dehydroquinate dehydratase (155 aa).

Residue tyrosine 31 is the Proton acceptor of the active site. Asparagine 83, histidine 89, and aspartate 96 together coordinate substrate. Residue histidine 109 is the Proton donor of the active site. Residues 110–111 (LS) and arginine 120 each bind substrate.

It belongs to the type-II 3-dehydroquinase family. Homododecamer.

The catalysed reaction is 3-dehydroquinate = 3-dehydroshikimate + H2O. The protein operates within metabolic intermediate biosynthesis; chorismate biosynthesis; chorismate from D-erythrose 4-phosphate and phosphoenolpyruvate: step 3/7. Functionally, catalyzes a trans-dehydration via an enolate intermediate. The sequence is that of 3-dehydroquinate dehydratase from Laribacter hongkongensis (strain HLHK9).